The chain runs to 275 residues: MAEPASVAAESLAGSRARAARTVLGQVVLPGEELLLPEQEDAEGPGGAVERPLSLNARACSRVRVVCGPGLRRCGDRLLVTKCGRLRHKEPGSGSGGGVYWVDSQQKRYVPVKGDHVIGIVTAKSGDIFKVDVGGSEPASLSYLSFEGATKRNRPNVQVGDLIYGQFVVANKDMEPEMVCIDSCGRANGMGVIGQDGLLFKVTLGLIRKLLAPDCEIIQEVGKLYPLEIVFGMNGRIWVKAKTIQQTLILANILEACEHMTSDQRKQIFSRLAES.

Ala-2 is subject to N-acetylalanine. Lys-151 participates in a covalent cross-link: Glycyl lysine isopeptide (Lys-Gly) (interchain with G-Cter in SUMO2).

Belongs to the RRP40 family. In terms of assembly, component of the RNA exosome core complex (Exo-9), composed of EXOSC1, EXOSC2, EXOSC3, EXOSC4, EXOSC5, EXOSC6, EXOSC7, EXOSC8 and EXOSC9; within the complex interacts with EXOSC5 and EXOSC9. The catalytically inactive RNA exosome core complex (Exo-9) associates with the catalytic subunit EXOSC10/RRP6. Exo-9 may associate with DIS3 to form the nucleolar exosome complex, or DIS3L to form the cytoplasmic exosome complex. Exo-9 is formed by a hexameric base ring consisting of the heterodimers EXOSC4-EXOSC9, EXOSC5-EXOSC8 and EXOSC6-EXOSC7, and a cap ring consisting of EXOSC1, EXOSC2 and EXOSC3. The RNA exosome complex associates with cofactors C1D/RRP47, MPHOSPH6/MPP6 and MTREX/MTR4. Interacts with MPHOSPH6/MPP6; the interaction is direct. Interacts with GTPBP1. Interacts with ZC3HAV1. Interacts with DDX17 only in the presence of ZC3HAV1 in an RNA-independent manner. Interacts with DHX36; this interaction occurs in a RNase-insensitive manner. Interacts with HBS1L isoform 2.

Its subcellular location is the cytoplasm. The protein resides in the nucleus. It localises to the nucleolus. In terms of biological role, non-catalytic component of the RNA exosome complex which has 3'-&gt;5' exoribonuclease activity and participates in a multitude of cellular RNA processing and degradation events. In the nucleus, the RNA exosome complex is involved in proper maturation of stable RNA species such as rRNA, snRNA and snoRNA, in the elimination of RNA processing by-products and non-coding 'pervasive' transcripts, such as antisense RNA species and promoter-upstream transcripts (PROMPTs), and of mRNAs with processing defects, thereby limiting or excluding their export to the cytoplasm. The RNA exosome may be involved in Ig class switch recombination (CSR) and/or Ig variable region somatic hypermutation (SHM) by targeting AICDA deamination activity to transcribed dsDNA substrates. In the cytoplasm, the RNA exosome complex is involved in general mRNA turnover and specifically degrades inherently unstable mRNAs containing AU-rich elements (AREs) within their 3' untranslated regions, and in RNA surveillance pathways, preventing translation of aberrant mRNAs. It seems to be involved in degradation of histone mRNA. The catalytic inactive RNA exosome core complex of 9 subunits (Exo-9) is proposed to play a pivotal role in the binding and presentation of RNA for ribonucleolysis, and to serve as a scaffold for the association with catalytic subunits and accessory proteins or complexes. EXOSC3 as peripheral part of the Exo-9 complex stabilizes the hexameric ring of RNase PH-domain subunits through contacts with EXOSC9 and EXOSC5. This Homo sapiens (Human) protein is Exosome complex component RRP40 (EXOSC3).